We begin with the raw amino-acid sequence, 277 residues long: uncharacterized protein (277 aa).

The tract at residues 232 to 262 (NNESAICESQASSKEDERSDKTTSSSKKKSF) is disordered. The segment covering 234–243 (ESAICESQAS) has biased composition (polar residues).

It is found in the cytoplasm. The protein localises to the nucleus. This is an uncharacterized protein from Schizosaccharomyces pombe (strain 972 / ATCC 24843) (Fission yeast).